Reading from the N-terminus, the 156-residue chain is Hemerythrin-like protein (156 aa).

Fe cation-binding residues include histidine 54, histidine 84, glutamate 88, histidine 109, histidine 113, histidine 142, and aspartate 147.

It belongs to the hemerythrin family.

In terms of biological role, oxygen-binding protein. The oxygen-binding site contains two iron atoms. This Nematostella vectensis (Starlet sea anemone) protein is Hemerythrin-like protein.